The sequence spans 658 residues: MSDVRVTVQRGQQAEERVVRTGTTAAELFDGERSVIAARVGGLQRDLSHPLAAGDVVEPITVDSPDGRAIVRHSCAHVVAQAVQDLFPKARLGIGPPIQDGFYYDFDVERPFTPEDLKAVEKRAQEIIKAGQRFARRVVSEDEARAELADEPYKIELIGLKSSAGDDAEAGVEVGEGELTIYDNLDPKSGELCWKDLCRGPHVPTTRHIPAFAVQRSAAAYWRGSERNPQLQRIYGTAWESRDALKAYQHRLAEAEKRDHRRLGAELDLFSFPTEIGPGLAVFHPKGGAIRTVMEDYSRRRHIEAGYEFVNTPHITKSDLYEISGHLDWFADGMYPPMQLDGGADYYLKPMNCPMHILIFRSRGRSYRELPLRLFEFGTVYRYEKSGVVHGLTRVRGLTQDDAHLFCAREQLPTELDTVLKFVLGLLRDYGLEDFYLELSTRPPGKAIGSDKEWEEATELLREAASKQDLELVMDEGGGAFYGPKISVQARDAIGRTWQLSTIQVDFQLPQRFDMTYQAADGTRQRPFMIHRALFGTIERFFAILLEHYAGALPPWLAPVQVVGIPITDEHVPYLTDVAAKLRQRGIRVEVDSSDDRMQKKIRTAQKQKVPFMLLAGDEDVAKGAVSFRFRDGTQRNGVPVDEAVAEILDAVERRIQV.

One can recognise a TGS domain in the interval 1–61 (MSDVRVTVQR…AAGDVVEPIT (61 aa)). Residues 259–554 (DHRRLGAELD…LLEHYAGALP (296 aa)) form a catalytic region. Zn(2+) contacts are provided by Cys353, His404, and His531.

The protein belongs to the class-II aminoacyl-tRNA synthetase family. Homodimer. The cofactor is Zn(2+).

It localises to the cytoplasm. The catalysed reaction is tRNA(Thr) + L-threonine + ATP = L-threonyl-tRNA(Thr) + AMP + diphosphate + H(+). Functionally, catalyzes the attachment of threonine to tRNA(Thr) in a two-step reaction: L-threonine is first activated by ATP to form Thr-AMP and then transferred to the acceptor end of tRNA(Thr). Also edits incorrectly charged L-seryl-tRNA(Thr). This chain is Threonine--tRNA ligase, found in Parafrankia sp. (strain EAN1pec).